Consider the following 243-residue polypeptide: Type III pantothenate kinase (243 aa).

7-14 (DLGNSRFK) is an ATP binding site. Residues Tyr91 and 98 to 101 (GVDR) each bind substrate. The active-site Proton acceptor is Asp100. Thr122 contributes to the ATP binding site. Thr172 lines the substrate pocket.

This sequence belongs to the type III pantothenate kinase family. Homodimer. Requires NH4(+) as cofactor. K(+) serves as cofactor.

It is found in the cytoplasm. The enzyme catalyses (R)-pantothenate + ATP = (R)-4'-phosphopantothenate + ADP + H(+). It functions in the pathway cofactor biosynthesis; coenzyme A biosynthesis; CoA from (R)-pantothenate: step 1/5. Catalyzes the phosphorylation of pantothenate (Pan), the first step in CoA biosynthesis. The sequence is that of Type III pantothenate kinase from Stenotrophomonas maltophilia (strain R551-3).